Here is a 616-residue protein sequence, read N- to C-terminus: Kelch-like protein 36 (616 aa).

The BTB domain occupies 46–113 (CDVVLVADEQ…LYGGELVLDG (68 aa)). One can recognise a BACK domain in the interval 148–250 (YLYLQELASI…PKNDLLHRVK (103 aa)). 6 Kelch repeats span residues 296–345 (CLLF…VLGG), 346–397 (FIFI…SIED), 398–444 (MLVA…IYKD), 446–493 (VYIS…SLGD), 494–546 (SIYS…VWEG), and 547–595 (RIYI…VCAL).

In terms of assembly, interacts with CUL3.

It functions in the pathway protein modification; protein ubiquitination. Functionally, probable substrate-specific adapter of an E3 ubiquitin-protein ligase complex which mediates the ubiquitination and subsequent proteasomal degradation of target proteins. The sequence is that of Kelch-like protein 36 (KLHL36) from Bos taurus (Bovine).